A 165-amino-acid polypeptide reads, in one-letter code: Small ribosomal subunit protein uS5 (165 aa).

One can recognise an S5 DRBM domain in the interval 10 to 73; that stretch reads LKEKVVFINR…EDAKKNLVEV (64 aa).

It belongs to the universal ribosomal protein uS5 family. As to quaternary structure, part of the 30S ribosomal subunit. Contacts proteins S4 and S8.

In terms of biological role, with S4 and S12 plays an important role in translational accuracy. Located at the back of the 30S subunit body where it stabilizes the conformation of the head with respect to the body. The sequence is that of Small ribosomal subunit protein uS5 from Clostridium acetobutylicum (strain ATCC 824 / DSM 792 / JCM 1419 / IAM 19013 / LMG 5710 / NBRC 13948 / NRRL B-527 / VKM B-1787 / 2291 / W).